We begin with the raw amino-acid sequence, 542 residues long: Major facilitator superfamily transporter mfsA (542 aa).

11 consecutive transmembrane segments (helical) span residues 19-39, 70-90, 99-119, 127-149, 160-180, 194-214, 321-341, 349-369, 380-400, 413-432, and 444-464; these read FAAV…AGLL, GAVT…SMFC, LIFM…VCYT, FVIG…PVWQ, FLVC…YWVV, FPVA…LMLP, IMGG…FFMI, LYLI…ACLI, AVGI…LPWI, VGAS…VVMF, and VYLF…FFYV.

Belongs to the major facilitator superfamily. Sugar transporter (TC 2.A.1.1) family.

The protein localises to the membrane. Its function is as follows. Major facilitator superfamily transporter that may be involved in A.fumigatus adaptation to azoles such as vorizonazole. The sequence is that of Major facilitator superfamily transporter mfsA from Aspergillus fumigatus (strain ATCC MYA-4609 / CBS 101355 / FGSC A1100 / Af293) (Neosartorya fumigata).